Consider the following 208-residue polypeptide: Ras-related protein Rab-6A (208 aa).

Serine 2 carries the N-acetylserine modification. Residues serine 23, valine 24, glycine 25, lysine 26, threonine 27, serine 28, aspartate 39, asparagine 40, tyrosine 42, and threonine 45 each contribute to the GTP site. Position 27 (threonine 27) interacts with Mg(2+). The short motif at 32–50 is the Switch 1 element; sequence RFMYDSFDNTYQATIGIDF. Residues threonine 45 and aspartate 68 each coordinate Mg(2+). A Switch 2 motif is present at residues 69-88; sequence TAGQERFRSLIPSYIRDSTV. Residue glycine 71 participates in GTP binding. Tyrosine 82 carries the O-AMP-tyrosine; by Legionella DrrA modification. GTP contacts are provided by asparagine 126, lysine 127, aspartate 129, serine 156, alanine 157, and lysine 158. Position 184 is a phosphoserine (serine 184). Residues cysteine 206 and cysteine 208 are each lipidated (S-geranylgeranyl cysteine). Cysteine 208 carries the cysteine methyl ester modification.

It belongs to the small GTPase superfamily. Rab family. As to quaternary structure, interacts (GTP-bound) with DYNLRB1; the interaction is direct. Interacts with BICD1. Interacts with BICD2; the interaction is direct. Interacts (GTP-bound) with VPS13B. Interacts with BICD1. Interacts (GDP-bound) with DYNLRB1; the interaction is direct. Interacts (GTP-bound) with VPS13B. In terms of assembly, interacts with BICDL1; leads to its accumulation in the pericentrosomal region. Interacts with SCYL1BP1. Interacts with VSP52. Interacts with RABGAP1. Interacts with GCC2 (via its GRIP domain). Interacts with RAB6IP1 (via its RUN 1 domain). Interacts with TMF1. Interacts with CIMAP3. Interacts (GTP-bound) with APBA1/MINT1 isoform 2, also called Mint1_826, but not with isoform 1. Interacts with RIC1; the interaction is direct with a preference for RAB6A-GDP. Interacts with RGP1; the interaction is direct with a preference for RAB6A-GDP. As to quaternary structure, (Microbial infection) Interacts with human cytomegalovirus protein UL32. Mg(2+) is required as a cofactor. Prenylated. Ubiquitous.

The protein localises to the golgi apparatus membrane. The protein resides in the cytoplasmic vesicle. It localises to the secretory vesicle. Its subcellular location is the acrosome membrane. The catalysed reaction is GTP + H2O = GDP + phosphate + H(+). Its activity is regulated as follows. Regulated by guanine nucleotide exchange factors (GEFs) which promote the exchange of bound GDP for free GTP. Regulated by GTPase activating proteins (GAPs) which increase the GTP hydrolysis activity. Inhibited by GDP dissociation inhibitors (GDIs). Its function is as follows. The small GTPases Rab are key regulators of intracellular membrane trafficking, from the formation of transport vesicles to their fusion with membranes. Rabs cycle between an inactive GDP-bound form and an active GTP-bound form that is able to recruit to membranes different sets of downstream effectors directly responsible for vesicle formation, movement, tethering and fusion. RAB6A acts as a regulator of COPI-independent retrograde transport from the Golgi apparatus towards the endoplasmic reticulum (ER). Has a low GTPase activity. Recruits VPS13B to the Golgi membrane. Plays a role in neuron projection development. This Homo sapiens (Human) protein is Ras-related protein Rab-6A.